Here is a 226-residue protein sequence, read N- to C-terminus: Biosynthetic peptidoglycan transglycosylase (226 aa).

A helical membrane pass occupies residues 8 to 28 (FFGWTWFVMWRFLLLLALLLL).

It belongs to the glycosyltransferase 51 family.

The protein localises to the cell inner membrane. It catalyses the reaction [GlcNAc-(1-&gt;4)-Mur2Ac(oyl-L-Ala-gamma-D-Glu-L-Lys-D-Ala-D-Ala)](n)-di-trans,octa-cis-undecaprenyl diphosphate + beta-D-GlcNAc-(1-&gt;4)-Mur2Ac(oyl-L-Ala-gamma-D-Glu-L-Lys-D-Ala-D-Ala)-di-trans,octa-cis-undecaprenyl diphosphate = [GlcNAc-(1-&gt;4)-Mur2Ac(oyl-L-Ala-gamma-D-Glu-L-Lys-D-Ala-D-Ala)](n+1)-di-trans,octa-cis-undecaprenyl diphosphate + di-trans,octa-cis-undecaprenyl diphosphate + H(+). It functions in the pathway cell wall biogenesis; peptidoglycan biosynthesis. Its function is as follows. Peptidoglycan polymerase that catalyzes glycan chain elongation from lipid-linked precursors. This is Biosynthetic peptidoglycan transglycosylase from Shewanella frigidimarina (strain NCIMB 400).